A 408-amino-acid polypeptide reads, in one-letter code: Probable medium-chain specific acyl-CoA dehydrogenase 2, mitochondrial (408 aa).

Residues 1-5 constitute a mitochondrion transit peptide; sequence MLSRL. FAD is bound by residues 143–152 and 176–178; these read YCVTEPGAGS and WIT. Ser152 contributes to the substrate binding site. 263–266 contributes to the substrate binding site; sequence DMTR. Residues 291 to 293, 301 to 302, and 355 to 359 contribute to the FAD site; these read RKA, HQ, and MLFRC. Glu382 serves as the catalytic Proton acceptor. Gly383 contributes to the substrate binding site. 384–386 contacts FAD; the sequence is TSQ. Arg394 is a substrate binding site.

It belongs to the acyl-CoA dehydrogenase family. Homotetramer. It depends on FAD as a cofactor.

Its subcellular location is the mitochondrion matrix. It carries out the reaction a medium-chain 2,3-saturated fatty acyl-CoA + oxidized [electron-transfer flavoprotein] + H(+) = a medium-chain (2E)-enoyl-CoA + reduced [electron-transfer flavoprotein]. Its pathway is lipid metabolism; mitochondrial fatty acid beta-oxidation. Its function is as follows. This enzyme is specific for acyl chain lengths of 4 to 16. This is Probable medium-chain specific acyl-CoA dehydrogenase 2, mitochondrial from Caenorhabditis briggsae.